The chain runs to 450 residues: MEEPQKNDLSMRGQEEDHPVRSSGPQISVSEFSCHCCYDTLVNPTTLNCGHSFCRHCLALWWMSSKKTECPECREKWEGFPKVNILLRDAIEKLFPDAIKMRVEDIQQNNDVVQSLAAFQKYGNDQNPLAPSTGRVNQQRGGGFFSGVLTALTGVAVILLVYHWRSRESEHGLLVHKAVDKWTTEEVVLWLEQLGPWASLYRDRFLSERVNGRLLLTLTEEEFSRAPYTIENSSHRRVILMELERVRALGVKPPQNLWEYKAVNPGRSLFLLYALKSSPRLGLLYLYLFDYTDSFLPFIHTICPLQEDSFGEDIFTKLLDLREPTWKQWREFLIKYSFLPYQLIAEFAWDWLEVHYWTSRFLIVNAMLLSVLELFSFWRIWSRSELKTVPQRMWSHFWKVSTQGLFMAMFWPLIPQFVCNCLFYWALYFNPIINIDLVVKEIRRLETQVF.

The tract at residues 1–24 (MEEPQKNDLSMRGQEEDHPVRSSG) is disordered. At 1–140 (MEEPQKNDLS…PSTGRVNQQR (140 aa)) the chain is on the cytoplasmic side. An RING-type zinc finger spans residues 34-74 (CHCCYDTLVNPTTLNCGHSFCRHCLALWWMSSKKTECPECR). A helical membrane pass occupies residues 141-161 (GGGFFSGVLTALTGVAVILLV). The Extracellular segment spans residues 162 to 331 (YHWRSRESEH…REPTWKQWRE (170 aa)). Positions 182–249 (WTTEEVVLWL…LMELERVRAL (68 aa)) constitute an SAM domain. N232 carries an N-linked (GlcNAc...) asparagine glycan. Residues 332–352 (FLIKYSFLPYQLIAEFAWDWL) form a helical membrane-spanning segment. The Cytoplasmic portion of the chain corresponds to 353–360 (EVHYWTSR). Residues 361-381 (FLIVNAMLLSVLELFSFWRIW) form a helical membrane-spanning segment. Topologically, residues 382–404 (SRSELKTVPQRMWSHFWKVSTQG) are extracellular. A helical transmembrane segment spans residues 405–425 (LFMAMFWPLIPQFVCNCLFYW). At 426 to 450 (ALYFNPIINIDLVVKEIRRLETQVF) the chain is on the cytoplasmic side.

As to quaternary structure, interacts with CASP8, BCL2 and BCL2L1 through SAM domain and also with HIP1, IFT57, ESRRBL1 and BCAP31. Interacts with NGFR; this interaction inhibits NF-kappa-B and JNK-related signaling pathways. Mediates RING-dependent self-ubiquitination leading to proteasomal degradation.

The protein localises to the endoplasmic reticulum membrane. It carries out the reaction S-ubiquitinyl-[E2 ubiquitin-conjugating enzyme]-L-cysteine + [acceptor protein]-L-lysine = [E2 ubiquitin-conjugating enzyme]-L-cysteine + N(6)-ubiquitinyl-[acceptor protein]-L-lysine.. Its function is as follows. Membrane-bound E3 ubiquitin ligase that plays a role in several processes including apoptosis regulation or reticulum endoplasmic stress. Has anti-apoptotic activity, both for apoptosis triggered via death-receptors and via mitochondrial factors. Contributes to the dynamic control of IRE1/ERN1 signaling during ER stress by inducing BAX inhibitor 1/TMBIM6 proteasomal degradation. Promotes the activation of TGF-beta signaling by mediating the 'Lys-63'-linked ubiquitination of TGFBR1 which is critical to activate the pathway. Together with NGFR, negatively regulates NF-kappa-B and JNK-related signaling pathways. Promotes the proteasome-mediated degradation of PNPLA3, a protein involveld in lipid metabolism. The chain is Bifunctional apoptosis regulator (Bfar) from Rattus norvegicus (Rat).